Consider the following 378-residue polypeptide: Queuine tRNA-ribosyltransferase (378 aa).

The active-site Proton acceptor is Asp-89. Substrate is bound by residues 89 to 93 (DSGGF), Asp-143, Gln-187, and Gly-214. The tract at residues 245–251 (GVGKPED) is RNA binding. Residue Asp-264 is the Nucleophile of the active site. An RNA binding; important for wobble base 34 recognition region spans residues 269–273 (TRNAR). Zn(2+) contacts are provided by Cys-302, Cys-304, Cys-307, and His-333.

Belongs to the queuine tRNA-ribosyltransferase family. As to quaternary structure, homodimer. Within each dimer, one monomer is responsible for RNA recognition and catalysis, while the other monomer binds to the replacement base PreQ1. The cofactor is Zn(2+).

The enzyme catalyses 7-aminomethyl-7-carbaguanine + guanosine(34) in tRNA = 7-aminomethyl-7-carbaguanosine(34) in tRNA + guanine. It participates in tRNA modification; tRNA-queuosine biosynthesis. Functionally, catalyzes the base-exchange of a guanine (G) residue with the queuine precursor 7-aminomethyl-7-deazaguanine (PreQ1) at position 34 (anticodon wobble position) in tRNAs with GU(N) anticodons (tRNA-Asp, -Asn, -His and -Tyr). Catalysis occurs through a double-displacement mechanism. The nucleophile active site attacks the C1' of nucleotide 34 to detach the guanine base from the RNA, forming a covalent enzyme-RNA intermediate. The proton acceptor active site deprotonates the incoming PreQ1, allowing a nucleophilic attack on the C1' of the ribose to form the product. After dissociation, two additional enzymatic reactions on the tRNA convert PreQ1 to queuine (Q), resulting in the hypermodified nucleoside queuosine (7-(((4,5-cis-dihydroxy-2-cyclopenten-1-yl)amino)methyl)-7-deazaguanosine). The polypeptide is Queuine tRNA-ribosyltransferase (Aeromonas hydrophila subsp. hydrophila (strain ATCC 7966 / DSM 30187 / BCRC 13018 / CCUG 14551 / JCM 1027 / KCTC 2358 / NCIMB 9240 / NCTC 8049)).